A 461-amino-acid polypeptide reads, in one-letter code: Cytochrome P450 monooxygenase sol6 (461 aa).

A helical transmembrane segment spans residues 7 to 27; that stretch reads IGWLVLSCGLFVAYWVLLAIY. Asn307 and Asn324 each carry an N-linked (GlcNAc...) asparagine glycan. Cys444 is a heme binding site.

This sequence belongs to the cytochrome P450 family. Requires heme as cofactor.

The protein resides in the membrane. The protein operates within phytotoxin biosynthesis. Cytochrome P450 monooxygenase; part of the gene cluster that mediates the biosynthesis of the phytotoxin solanapyrone, a causal agent of early blight disease of potato and tomato. The prosolanapyrone synthase sol1 is a polyketide synthase that produces the octaketide desmethylprosolanapyrone I via sequential condensations of 7 malonyl-CoA units with one acetyl-CoA unit, and one methylation step. The octaketide backbone is further methylated by the sol2 O-methyltransferase to yield prosolanapyrone I. Prosolanapyrone I is hydroxylated to prosolanapyrone II by the cytochrome P450 monooxygenase sol6. The solanapyrone synthase sol5 then catalyzes the oxidation of prosolanapyrone II and the subsequent Diels Alder cycloisomerization of the product prosolanapyrone III to solanapyrones A and D. Solanapyrones A and D are then converted into solanapyrones B and E, respectively, by the sol3 dehydrogenase. This chain is Cytochrome P450 monooxygenase sol6 (sol6), found in Alternaria solani.